A 687-amino-acid polypeptide reads, in one-letter code: DNA ligase (687 aa).

Residues 33 to 37 (DAEFD), 83 to 84 (SL), and Glu113 contribute to the NAD(+) site. The N6-AMP-lysine intermediate role is filled by Lys115. NAD(+) is bound by residues Arg136, Glu176, Lys292, and Lys316. Zn(2+) contacts are provided by Cys410, Cys413, Cys429, and Cys435. The 89-residue stretch at 599–687 (SVPRTLAGVT…GPPAEVGEPT (89 aa)) folds into the BRCT domain.

This sequence belongs to the NAD-dependent DNA ligase family. LigA subfamily. Mg(2+) serves as cofactor. The cofactor is Mn(2+).

The catalysed reaction is NAD(+) + (deoxyribonucleotide)n-3'-hydroxyl + 5'-phospho-(deoxyribonucleotide)m = (deoxyribonucleotide)n+m + AMP + beta-nicotinamide D-nucleotide.. Its function is as follows. DNA ligase that catalyzes the formation of phosphodiester linkages between 5'-phosphoryl and 3'-hydroxyl groups in double-stranded DNA using NAD as a coenzyme and as the energy source for the reaction. It is essential for DNA replication and repair of damaged DNA. The polypeptide is DNA ligase (Mycobacterium marinum (strain ATCC BAA-535 / M)).